The sequence spans 30 residues: Conotoxin CcTx (30 aa).

Pro-2 is subject to 4-hydroxyproline. Ser-7 carries O-linked (HexNAc...) serine glycosylation. Cystine bridges form between Cys-12-Cys-21, Cys-13-Cys-26, and Cys-24-Cys-30. A 4-hydroxyproline mark is found at Pro-17 and Pro-22.

O-glycosylated at Ser-7 by a core type 9 glycan, containing both D- and L-galactose units (alpha-L-Galp-(1-&gt;4)-alpha-D- GlcpNAc-(1-&gt;6)-[alpha-L-Galp-(1-&gt;2)-bets-D-Galp-(1-&gt;3)-]alpha-D-GalpNAc-(1-&gt;O)). In terms of tissue distribution, expressed by the venom duct.

The protein resides in the secreted. Functionally, may specifically activate neuronal voltage-gated sodium channels (Nav) at the resting membrane potential. Causes a marked contraction and extension of the caudal and dorsal fins in fish and noticeable spontaneous contractions of isolated frog neuromuscular preparations. This chain is Conotoxin CcTx, found in Conus consors (Singed cone).